Here is a 759-residue protein sequence, read N- to C-terminus: Protein MTSS 1 (759 aa).

The region spanning 1–254 (MEAVIEKECS…EQVILDLKGS (254 aa)) is the IMD domain. The stretch at 108 to 157 (LQEQMEEWKKVANQLDKDHAKEYKKARQEIKNKSSDTLKLQKKAKKVDAQ) forms a coiled coil. A disordered region spans residues 259–309 (SYQTPPSSPSTTMSRKSSVCSSLNSVNSSDSRSSGSHSHSPSSHYRYRSSN). At threonine 262 the chain carries Phosphothreonine. Residues serine 265, serine 266, serine 275, and serine 326 each carry the phosphoserine modification. The disordered stretch occupies residues 331–354 (QDAFQSKSPSPMPPEAANQLSNGF). Residue threonine 429 is modified to Phosphothreonine. 2 disordered regions span residues 431–472 (QRRK…AATR) and 569–759 (KRPA…PRFS). Threonine 607 is subject to Phosphothreonine. Positions 612-627 (PIPIKTPVIPVKTPTV) are enriched in low complexity. Residues serine 648 and serine 651 each carry the phosphoserine modification. Residues 660–670 (GVSNIPSSLWS) are compositionally biased toward polar residues. Residues 675 to 685 (VNPPLPGPKPS) show a composition bias toward pro residues. Residues 731 to 748 (QGEDMLNAIRRGVKLKKT) enclose the WH2 domain.

This sequence belongs to the MTSS family. In terms of assembly, binds to actin. Strongly expressed in the developing neurons and skeletal and cardiac muscles in embryos. Strongly expressed also in liver, outer layers of the kidney, and in the Purkinje cells of the brain.

Its subcellular location is the cytoplasm. It is found in the cytoskeleton. Inhibits the nucleation of actin filaments in vitro. In Mus musculus (Mouse), this protein is Protein MTSS 1.